A 524-amino-acid chain; its full sequence is L-tyrosine:2-oxoglutarate aminotransferase atrD (524 aa).

This sequence belongs to the class-I pyridoxal-phosphate-dependent aminotransferase family. It depends on pyridoxal 5'-phosphate as a cofactor.

The catalysed reaction is L-tyrosine + 2-oxoglutarate = 3-(4-hydroxyphenyl)pyruvate + L-glutamate. Its pathway is secondary metabolite biosynthesis. The L-tyrosine:2-oxoglutarate aminotransferase atrD and the atromentin synthetase atrA catalyze consecutive steps to turn over L-tyrosine into atromentin, which represents the generic precursor molecule for the entire terphenylquinone and pulvinic acid family of pigments, which are widely distributed secondary metabolites in homobasidiomycetes. The first step is catalyzed by atrD which converts L-tyrosine in to 4-hydroxyphenylpyruvate (4-HPP). Adenylation of two 4-HPP monomers by the atrA adenylation (A) domain, ester bond formation between monomers and atrA, and symmetric C-C-bond formation between two monomers by atrA leads to atromentin. The chain is L-tyrosine:2-oxoglutarate aminotransferase atrD from Tapinella panuoides (Oyster rollrim mushroom).